The primary structure comprises 156 residues: ATP synthase subunit b (156 aa).

A helical transmembrane segment spans residues 7–29; that stretch reads LLGQAISFLLFVWFCMKFVWPPL.

It belongs to the ATPase B chain family. F-type ATPases have 2 components, F(1) - the catalytic core - and F(0) - the membrane proton channel. F(1) has five subunits: alpha(3), beta(3), gamma(1), delta(1), epsilon(1). F(0) has three main subunits: a(1), b(2) and c(10-14). The alpha and beta chains form an alternating ring which encloses part of the gamma chain. F(1) is attached to F(0) by a central stalk formed by the gamma and epsilon chains, while a peripheral stalk is formed by the delta and b chains.

Its subcellular location is the cell inner membrane. Its function is as follows. F(1)F(0) ATP synthase produces ATP from ADP in the presence of a proton or sodium gradient. F-type ATPases consist of two structural domains, F(1) containing the extramembraneous catalytic core and F(0) containing the membrane proton channel, linked together by a central stalk and a peripheral stalk. During catalysis, ATP synthesis in the catalytic domain of F(1) is coupled via a rotary mechanism of the central stalk subunits to proton translocation. Functionally, component of the F(0) channel, it forms part of the peripheral stalk, linking F(1) to F(0). The chain is ATP synthase subunit b from Shewanella halifaxensis (strain HAW-EB4).